The sequence spans 300 residues: MGKTQILWGIAPIGWRNDDIPEIGAGNTLQHLLSDIVVAGFQGTEVGGFFPEPAILNKELELRNLRIAGKWFSSYIIRDGIEEAAKEFAAHCQYLKDVHADVAVVSEQTYSVQGLDKNVFKEKPYFTDEEWQRLFEGLNHLGEIAGRYGLKLVYHHHLGTGVQTEEEVDRLMAGTDPALVHLLYDTGHAYISDGNYMNILEKHIDRIRHVHFKDARLKIMEKCKREGNSFQQAFLQGMFTVPGDGCIDFREVYQTLLKHGYSGWIVVEAEQDPDVANPLEYALIARKYIDRHLLNVPATN.

It belongs to the IolE/MocC family. Glutathione serves as cofactor. It depends on Co(2+) as a cofactor. The cofactor is Mn(2+).

It carries out the reaction scyllo-inosose = 3D-3,5/4-trihydroxycyclohexane-1,2-dione + H2O. It functions in the pathway polyol metabolism; myo-inositol degradation into acetyl-CoA; acetyl-CoA from myo-inositol: step 2/7. Its function is as follows. Catalyzes the dehydration of inosose (2-keto-myo-inositol, 2KMI or 2,4,6/3,5-pentahydroxycyclohexanone) to 3D-(3,5/4)-trihydroxycyclohexane-1,2-dione (D-2,3-diketo-4-deoxy-epi-inositol). In Bacillus licheniformis (strain ATCC 14580 / DSM 13 / JCM 2505 / CCUG 7422 / NBRC 12200 / NCIMB 9375 / NCTC 10341 / NRRL NRS-1264 / Gibson 46), this protein is Inosose dehydratase.